Reading from the N-terminus, the 343-residue chain is Uroporphyrinogen decarboxylase (343 aa).

Substrate contacts are provided by residues R23–R27, D73, Y150, S205, and H322.

It belongs to the uroporphyrinogen decarboxylase family. In terms of assembly, homodimer.

Its subcellular location is the cytoplasm. It carries out the reaction uroporphyrinogen III + 4 H(+) = coproporphyrinogen III + 4 CO2. It functions in the pathway porphyrin-containing compound metabolism; protoporphyrin-IX biosynthesis; coproporphyrinogen-III from 5-aminolevulinate: step 4/4. In terms of biological role, catalyzes the decarboxylation of four acetate groups of uroporphyrinogen-III to yield coproporphyrinogen-III. This chain is Uroporphyrinogen decarboxylase, found in Cereibacter sphaeroides (strain ATCC 17029 / ATH 2.4.9) (Rhodobacter sphaeroides).